Reading from the N-terminus, the 782-residue chain is Endonuclease MutS2 (782 aa).

An ATP-binding site is contributed by 336 to 343 (GPNTGGKT). In terms of domain architecture, Smr spans 707 to 782 (LDLRGYRYED…GFGVTVATLK (76 aa)).

The protein belongs to the DNA mismatch repair MutS family. MutS2 subfamily. As to quaternary structure, homodimer. Binds to stalled ribosomes, contacting rRNA.

Its function is as follows. Endonuclease that is involved in the suppression of homologous recombination and thus may have a key role in the control of bacterial genetic diversity. Acts as a ribosome collision sensor, splitting the ribosome into its 2 subunits. Detects stalled/collided 70S ribosomes which it binds and splits by an ATP-hydrolysis driven conformational change. Acts upstream of the ribosome quality control system (RQC), a ribosome-associated complex that mediates the extraction of incompletely synthesized nascent chains from stalled ribosomes and their subsequent degradation. Probably generates substrates for RQC. The polypeptide is Endonuclease MutS2 (Staphylococcus aureus (strain MSSA476)).